The sequence spans 434 residues: Histidinol dehydrogenase (434 aa).

Y130, Q188, and N211 together coordinate NAD(+). Positions 237, 259, and 262 each coordinate substrate. Zn(2+) contacts are provided by Q259 and H262. Active-site proton acceptor residues include E326 and H327. Residues H327, D360, E414, and H419 each contribute to the substrate site. Residue D360 participates in Zn(2+) binding. Position 419 (H419) interacts with Zn(2+).

It belongs to the histidinol dehydrogenase family. As to quaternary structure, homodimer. Zn(2+) serves as cofactor.

It catalyses the reaction L-histidinol + 2 NAD(+) + H2O = L-histidine + 2 NADH + 3 H(+). It participates in amino-acid biosynthesis; L-histidine biosynthesis; L-histidine from 5-phospho-alpha-D-ribose 1-diphosphate: step 9/9. Functionally, catalyzes the sequential NAD-dependent oxidations of L-histidinol to L-histidinaldehyde and then to L-histidine. The sequence is that of Histidinol dehydrogenase from Escherichia coli O157:H7.